The primary structure comprises 144 residues: Phosphomevalonate dehydratase small subunit (144 aa).

Serine 65 acts as the Proton acceptor in catalysis.

This sequence belongs to the AcnX type II small subunit family. In terms of assembly, heterodimer composed of a large subunit (PMDh-L) and a small subunit (PMDh-S).

The catalysed reaction is (R)-5-phosphomevalonate = (2E)-3-methyl-5-phosphooxypent-2-enoate + H2O. Its pathway is isoprenoid biosynthesis; isopentenyl diphosphate biosynthesis via mevalonate pathway. In terms of biological role, component of a hydro-lyase that catalyzes the dehydration of mevalonate 5-phosphate (MVA5P) to form trans-anhydromevalonate 5-phosphate (tAHMP). Involved in the archaeal mevalonate (MVA) pathway, which provides fundamental precursors for isoprenoid biosynthesis, such as isopentenyl diphosphate (IPP) and dimethylallyl diphosphate (DMAPP). In Methanosarcina mazei (strain ATCC BAA-159 / DSM 3647 / Goe1 / Go1 / JCM 11833 / OCM 88) (Methanosarcina frisia), this protein is Phosphomevalonate dehydratase small subunit.